A 149-amino-acid chain; its full sequence is Glutamate mutase sigma subunit (149 aa).

In terms of domain architecture, B12-binding spans 5-138 (DPTVVLGTIG…DAVKTELDVD (134 aa)). Residues 15–19 (SDAHA), H18, 63–65 (SSL), and 94–98 (NLAVG) each bind adenosylcob(III)alamin.

The protein belongs to the methylaspartate mutase GlmS subunit family. As to quaternary structure, heterotetramer composed of 2 epsilon subunits (GlmE) and 2 sigma subunits (GlmS). GlmE exists as a homodimer and GlmS as a monomer. It depends on adenosylcob(III)alamin as a cofactor.

It carries out the reaction (2S,3S)-3-methyl-L-aspartate = L-glutamate. The protein operates within amino-acid degradation; L-glutamate degradation via mesaconate pathway; acetate and pyruvate from L-glutamate: step 1/4. Catalyzes the carbon skeleton rearrangement of L-glutamate to L-threo-3-methylaspartate ((2S,3S)-3-methylaspartate). This Halobacterium salinarum (strain ATCC 700922 / JCM 11081 / NRC-1) (Halobacterium halobium) protein is Glutamate mutase sigma subunit.